Here is a 545-residue protein sequence, read N- to C-terminus: Membrane protein insertase YidC (545 aa).

6 helical membrane passes run 10–30 (AVYLSLFFIGIFMLLDDFLFS), 319–339 (LLYFLQVPMQLIMQIFYNVIP), 341–361 (WGLSIMFLTIVVRILIFPLTF), 407–427 (IGGCFPILLQLPVFFALYGLV), 467–487 (ILPFIMMITQLLSTIVSSNVS), and 502–522 (MPIMFFFILYDMPSGLLIYWI).

It belongs to the OXA1/ALB3/YidC family. Type 1 subfamily. In terms of assembly, interacts with the Sec translocase complex via SecD. Specifically interacts with transmembrane segments of nascent integral membrane proteins during membrane integration.

It is found in the cell inner membrane. Functionally, required for the insertion and/or proper folding and/or complex formation of integral membrane proteins into the membrane. Involved in integration of membrane proteins that insert both dependently and independently of the Sec translocase complex, as well as at least some lipoproteins. Aids folding of multispanning membrane proteins. In Borrelia recurrentis (strain A1), this protein is Membrane protein insertase YidC.